Reading from the N-terminus, the 37-residue chain is Large ribosomal subunit protein bL36 (37 aa).

This sequence belongs to the bacterial ribosomal protein bL36 family.

This Desulfitobacterium hafniense (strain Y51) protein is Large ribosomal subunit protein bL36.